Here is a 565-residue protein sequence, read N- to C-terminus: MAAPKTSIPSLAECQCGICMEILLEPVTLPCNHTLCNPCFQSTVEKANLCCPFCRRRVSSWTRYHTRRNSLVNTDLWEIIQKHYAKECKLRISGQESKEIIDECQPVRRLSEPGELRREYEEEISRVEAERQASKEEENKASEEYIQRLLAEEEEEEKRQREKRRSEMEEQLRGDEELARSLSTSINSNYERNTLASPLSSRKSDPVTNKSQKKNTSKQKTFGDIQKYLSPKLKPGTALACKAELEEDICKSKETDRSDTKSPVLQDTEIEKNIPTLSPQTCLETQEQGSESSAGIPGPQLCVGDTKESLEGKVETVSTSPDDLCIVNDDGPRATVFYSNEAAVNSSSKIENEEYSVTGVPQLTGGNRVPTESRVYHLLVEEEISDRENQESVFEEVMDPCFSAKRRKIFIESSSDQEETEVNFTQKLIDLEHMLFERHKQEEQDRLLALQLQKEVDKEQMVPNRQKGSPDQYQLRTPSPPDRLLNRQRKNSKDRNSLQQTNADHSKSPRNTKGDYWEPFKNTWKDSVNGTKMPTSTQDNCNVSKSAYTVQHRKSQRSIVQMFQR.

The RING-type zinc-finger motif lies at 16–55 (CGICMEILLEPVTLPCNHTLCNPCFQSTVEKANLCCPFCR). A Phosphoserine modification is found at Ser-70. An LR motif 1 motif is present at residues 110–128 (LSEPGELRREYEEEISRVE). At Ser-134 the chain carries Phosphoserine. A UMI motif motif is present at residues 143 to 151 (EEYIQRLLA). Disordered stretches follow at residues 150 to 223 (LAEE…KTFG) and 252 to 302 (SKET…PQLC). Residues 157-179 (EKRQREKRRSEMEEQLRGDEELA) show a composition bias toward basic and acidic residues. An MIU motif 1 motif is present at residues 168–191 (MEEQLRGDEELARSLSTSINSNYE). The segment covering 181–201 (SLSTSINSNYERNTLASPLSS) has biased composition (polar residues). Ser-197 bears the Phosphoserine mark. Lys-210 participates in a covalent cross-link: Glycyl lysine isopeptide (Lys-Gly) (interchain with G-Cter in SUMO2). Residues 275–293 (PTLSPQTCLETQEQGSESS) are compositionally biased toward polar residues. 2 positions are modified to phosphoserine: Ser-413 and Ser-414. The MIU motif 2 signature appears at 438–461 (RHKQEEQDRLLALQLQKEVDKEQM). A disordered region spans residues 458 to 521 (KEQMVPNRQK…TKGDYWEPFK (64 aa)). Positions 465–476 (RQKGSPDQYQLR) match the LR motif 2 motif. Polar residues predominate over residues 466–477 (QKGSPDQYQLRT). A Phosphoserine modification is found at Ser-469. Over residues 504–518 (DHSKSPRNTKGDYWE) the composition is skewed to basic and acidic residues. Lys-525 is covalently cross-linked (Glycyl lysine isopeptide (Lys-Gly) (interchain with G-Cter in SUMO2)).

Belongs to the RNF168 family. Monomer. Interacts with UBE2N/UBC13. Post-translationally, sumoylated with SUMO1 by PIAS4 in response to double-strand breaks (DSBs). Ubiquitinated.

The protein localises to the nucleus. The catalysed reaction is S-ubiquitinyl-[E2 ubiquitin-conjugating enzyme]-L-cysteine + [acceptor protein]-L-lysine = [E2 ubiquitin-conjugating enzyme]-L-cysteine + N(6)-ubiquitinyl-[acceptor protein]-L-lysine.. The protein operates within protein modification; protein ubiquitination. Its function is as follows. E3 ubiquitin-protein ligase required for accumulation of repair proteins to sites of DNA damage. Acts with UBE2N/UBC13 to amplify the RNF8-dependent histone ubiquitination. Recruited to sites of DNA damage at double-strand breaks (DSBs) by binding to ubiquitinated histone H2A and H2AX and amplifies the RNF8-dependent H2A ubiquitination, promoting the formation of 'Lys-63'-linked ubiquitin conjugates. This leads to concentrate ubiquitinated histones H2A and H2AX at DNA lesions to the threshold required for recruitment of TP53BP1 and BRCA1. Also recruited at DNA interstrand cross-links (ICLs) sites and promotes accumulation of 'Lys-63'-linked ubiquitination of histones H2A and H2AX, leading to recruitment of FAAP20 and Fanconi anemia (FA) complex, followed by interstrand cross-link repair. H2A ubiquitination also mediates the ATM-dependent transcriptional silencing at regions flanking DSBs in cis, a mechanism to avoid collision between transcription and repair intermediates. Also involved in class switch recombination in immune system, via its role in regulation of DSBs repair. Following DNA damage, promotes the ubiquitination and degradation of JMJD2A/KDM4A in collaboration with RNF8, leading to unmask H4K20me2 mark and promote the recruitment of TP53BP1 at DNA damage sites. Not able to initiate 'Lys-63'-linked ubiquitination in vitro; possibly due to partial occlusion of the UBE2N/UBC13-binding region. Catalyzes monoubiquitination of 'Lys-13' and 'Lys-15' of nucleosomal histone H2A (H2AK13Ub and H2AK15Ub, respectively). This Mus musculus (Mouse) protein is E3 ubiquitin-protein ligase RNF168.